A 286-amino-acid chain; its full sequence is Phosphatidylglycerol--prolipoprotein diacylglyceryl transferase (286 aa).

4 consecutive transmembrane segments (helical) span residues 25–45 (WYAL…RMLL), 65–85 (FILW…VLFY), 103–123 (GGMS…LFGW), and 127–147 (VPIL…LFLG). Position 148 (Arg148) interacts with a 1,2-diacyl-sn-glycero-3-phospho-(1'-sn-glycerol). Transmembrane regions (helical) follow at residues 188–208 (AGLE…AGAL), 212–232 (GLII…GEFF), and 248–268 (MGML…ITTW).

The protein belongs to the Lgt family.

It localises to the cell inner membrane. It catalyses the reaction L-cysteinyl-[prolipoprotein] + a 1,2-diacyl-sn-glycero-3-phospho-(1'-sn-glycerol) = an S-1,2-diacyl-sn-glyceryl-L-cysteinyl-[prolipoprotein] + sn-glycerol 1-phosphate + H(+). It functions in the pathway protein modification; lipoprotein biosynthesis (diacylglyceryl transfer). Catalyzes the transfer of the diacylglyceryl group from phosphatidylglycerol to the sulfhydryl group of the N-terminal cysteine of a prolipoprotein, the first step in the formation of mature lipoproteins. This is Phosphatidylglycerol--prolipoprotein diacylglyceryl transferase from Rhodopseudomonas palustris (strain ATCC BAA-98 / CGA009).